We begin with the raw amino-acid sequence, 846 residues long: Structure-specific endonuclease subunit SLX4 (846 aa).

Disordered regions lie at residues M1–A20, K84–M111, Q123–A164, R283–T322, D480–L513, P624–Q690, and T723–A751. The segment covering K141–A153 has biased composition (basic and acidic residues). The span at L293–G303 shows a compositional bias: polar residues. Positions K306–K318 are enriched in basic residues. Polar residues-rich tracts occupy residues K657–T680 and A725–A751.

This sequence belongs to the SLX4 family. In terms of assembly, forms a heterodimer with SLX1. Post-translationally, phosphorylated in response to DNA damage.

The protein localises to the nucleus. Regulatory subunit of the SLX1-SLX4 structure-specific endonuclease that resolves DNA secondary structures generated during DNA repair and recombination. Has endonuclease activity towards branched DNA substrates, introducing single-strand cuts in duplex DNA close to junctions with ss-DNA. This Arthroderma otae (strain ATCC MYA-4605 / CBS 113480) (Microsporum canis) protein is Structure-specific endonuclease subunit SLX4.